We begin with the raw amino-acid sequence, 262 residues long: Ribosomal RNA small subunit methyltransferase A (262 aa).

The S-adenosyl-L-methionine site is built by Asn13, Leu15, Gly40, Glu61, Asp85, and Asn104.

Belongs to the class I-like SAM-binding methyltransferase superfamily. rRNA adenine N(6)-methyltransferase family. RsmA subfamily.

The protein resides in the cytoplasm. It catalyses the reaction adenosine(1518)/adenosine(1519) in 16S rRNA + 4 S-adenosyl-L-methionine = N(6)-dimethyladenosine(1518)/N(6)-dimethyladenosine(1519) in 16S rRNA + 4 S-adenosyl-L-homocysteine + 4 H(+). In terms of biological role, specifically dimethylates two adjacent adenosines (A1518 and A1519) in the loop of a conserved hairpin near the 3'-end of 16S rRNA in the 30S particle. May play a critical role in biogenesis of 30S subunits. This chain is Ribosomal RNA small subunit methyltransferase A, found in Chromobacterium violaceum (strain ATCC 12472 / DSM 30191 / JCM 1249 / CCUG 213 / NBRC 12614 / NCIMB 9131 / NCTC 9757 / MK).